The chain runs to 491 residues: Katanin p60 ATPase-containing subunit A1 (491 aa).

The interaction with KATNB1 stretch occupies residues 1-29; it reads MSLLMITENVKLAREYALLGNYDSAMVYY. The segment at 1–75 is interaction with dynein and NDEL1; the sequence is MSLLMITENV…VKEIMKTLES (75 aa). An interaction with microtubules region spans residues 1 to 185; sequence MSLLMITENV…EPEANKFDST (185 aa). Phosphoserine; by DYRK2 is present on Ser42. Positions 87-183 are disordered; the sequence is QHELPSSEGE…VTEPEANKFD (97 aa). Positions 145-169 are enriched in basic and acidic residues; the sequence is HSDRGKAVRSREKKEQSKGREEKNK. 249 to 256 serves as a coordination point for ATP; sequence GPPGTGKT.

Belongs to the AAA ATPase family. Katanin p60 subunit A1 subfamily. As to quaternary structure, can homooligomerize into hexameric rings, which may be promoted by interaction with microtubules. Interacts with KATNB1, which may serve as a targeting subunit. Interacts with ASPM; the katanin complex formation KATNA1:KATNB1 is required for the association of ASPM. Interacts with dynein and NDEL1. Associates with the E3 ligase complex containing DYRK2, EDD/UBR5, DDB1 and DCAF1 proteins (EDVP complex). Interacts with KLHL42 (via the kelch domains). Interacts with CUL3; the interaction is enhanced by KLHL42. Interacts with KATNB1 and KATNBL1. Post-translationally, phosphorylation by DYRK2 triggers ubiquitination and subsequent degradation. In terms of processing, ubiquitinated by the BCR(KLHL42) E3 ubiquitin ligase complex, leading to its proteasomal degradation. Ubiquitinated by the EDVP E3 ligase complex and subsequently targeted for proteasomal degradation.

Its subcellular location is the cytoplasm. It is found in the midbody. The protein localises to the cytoskeleton. It localises to the microtubule organizing center. The protein resides in the centrosome. Its subcellular location is the spindle pole. It is found in the spindle. The catalysed reaction is n ATP + n H2O + a microtubule = n ADP + n phosphate + (n+1) alpha/beta tubulin heterodimers.. ATPase activity is stimulated by microtubules, which promote homooligomerization. ATP-dependent microtubule severing is stimulated by interaction with KATNB1. In terms of biological role, catalytic subunit of a complex which severs microtubules in an ATP-dependent manner. Microtubule severing may promote rapid reorganization of cellular microtubule arrays and the release of microtubules from the centrosome following nucleation. Microtubule release from the mitotic spindle poles may allow depolymerization of the microtubule end proximal to the spindle pole, leading to poleward microtubule flux and poleward motion of chromosome. Microtubule release within the cell body of neurons may be required for their transport into neuronal processes by microtubule-dependent motor proteins. This transport is required for axonal growth. The polypeptide is Katanin p60 ATPase-containing subunit A1 (Katna1) (Rattus norvegicus (Rat)).